Consider the following 205-residue polypeptide: Phosphoenolpyruvate guanylyltransferase (205 aa).

Thr138, Gly154, and Ser157 together coordinate phosphoenolpyruvate.

Belongs to the CofC family.

The enzyme catalyses phosphoenolpyruvate + GTP + H(+) = enolpyruvoyl-2-diphospho-5'-guanosine + diphosphate. It functions in the pathway cofactor biosynthesis; coenzyme F420 biosynthesis. In terms of biological role, guanylyltransferase that catalyzes the activation of phosphoenolpyruvate (PEP) as enolpyruvoyl-2-diphospho-5'-guanosine, via the condensation of PEP with GTP. It is involved in the biosynthesis of coenzyme F420, a hydride carrier cofactor. The sequence is that of Phosphoenolpyruvate guanylyltransferase from Chloroflexus aurantiacus (strain ATCC 29364 / DSM 637 / Y-400-fl).